Reading from the N-terminus, the 228-residue chain is uncharacterized protein (228 aa).

Transmembrane regions (helical) follow at residues 14–34 (GWYIRGALIANVIIMGFMWLI), 53–73 (FLIIGTFVRAVFIVFGAVLIV), 108–128 (GLTFITILLSNILIAAGFFWL), 148–168 (AVKMAVFAFGAAGTSLVPIFF), 178–198 (TIISSVVIVMLISSTSPGFSI), and 200–220 (SVVYIPLSLAAFGLFFSYMAI).

It localises to the cell membrane. This is an uncharacterized protein from Bacillus subtilis (strain 168).